A 513-amino-acid chain; its full sequence is MAEVGEIIEGCRLPVLRRNQDNEDEWPLAEILSVKDISGRKLFYVHYIDFNKRLDEWVTHERLDLKKIQFPKKEAKTPTKNGLPGSRPGSPEREVPASAQASGKTLPIPVQITLRFNLPKEREAIPGGEPDQPLSSSSCLQPNHRSTKRKVEVVSPATPVPSETAPASVFPQNGSARRAVAAQPGRKRKSNCLGTDEDSQDSSDGIPSAPRMTGSLVSDRSHDDIVTRMKNIECIELGRHRLKPWYFSPYPQELTTLPVLYLCEFCLKYGRSLKCLQRHLTKCDLRHPPGNEIYRKGTISFFEIDGRKNKSYSQNLCLLAKCFLDHKTLYYDTDPFLFYVMTEYDCKGFHIVGYFSKEKESTEDYNVACILTLPPYQRRGYGKLLIEFSYELSKVEGKTGTPEKPLSDLGLLSYRSYWSQTILEILMGLKSESGERPQITINEISEITSIKKEDVISTLQYLNLINYYKGQYILTLSEDIVDGHERAMLKRLLRIDSKCLHFTPKDWSKRGKW.

Residues I8–L65 form the Tudor-knot domain. The residue at position 52 (K52) is an N6-acetyllysine. The interval Q69–L106 is disordered. Position 86 is a phosphoserine (S86). S90 carries the post-translational modification Phosphoserine; by CDK1 and CDK9. K104 and K120 each carry N6-acetyllysine; by autocatalysis. The interval R122–V217 is disordered. Polar residues predominate over residues P133 to H144. 4 positions are modified to N6-acetyllysine; by autocatalysis: K148, K150, K187, and K189. S199 is modified (phosphoserine). The region spanning T227–P504 is the MYST-type HAT domain. Residues L260–L285 form a C2HC MYST-type zinc finger. K327 carries the N6-acetyllysine; by autocatalysis modification. The tract at residues A368–W513 is interaction with ATF2. Acetyl-CoA is bound by residues I370 to T372 and Q377 to K383. E403 (proton donor/acceptor) is an active-site residue. 2 residues coordinate acetyl-CoA: S407 and S416. Residue K430 forms a Glycyl lysine isopeptide (Lys-Gly) (interchain with G-Cter in SUMO1); alternate linkage. A Glycyl lysine isopeptide (Lys-Gly) (interchain with G-Cter in SUMO2); alternate cross-link involves residue K430. K451 is covalently cross-linked (Glycyl lysine isopeptide (Lys-Gly) (interchain with G-Cter in SUMO1)).

The protein belongs to the MYST (SAS/MOZ) family. As to quaternary structure, component of the NuA4 histone acetyltransferase complex which contains the catalytic subunit KAT5/TIP60 and the subunits EP400, TRRAP/PAF400, BRD8/SMAP, EPC1, DMAP1/DNMAP1, RUVBL1/TIP49, RUVBL2, ING3, actin, ACTL6A/BAF53A, MORF4L1/MRG15, MORF4L2/MRGX, MRGBP, YEATS4/GAS41, VPS72/YL1 and MEAF6. KAT5/TIP60, EPC1, and ING3 together constitute a minimal HAT complex termed Piccolo NuA4. The NuA4 complex interacts with MYC. Interacts with ATM. Interacts with JADE1. Interacts with PLA2G4A/CPLA2, EDNRA and HDAC7. Interacts with the cytoplasmic tail of APP and APBB1/FE65. Interacts with TRIM24 and TRIM68. Forms a complex with SENP6 and UBE2I in response to UV irradiation. Identified in a complex with HINT1. Interacts with ATF2 and CUL3. Interacts with NR1D2 (via N-terminus). Component of a SWR1-like complex. Interacts with FOXP3. Interacts with ZBTB49. Interacts with SRF. Interacts with ATF3; promoting autoacetylation and deubiquitination by USP7. Interacts with EP300/p300; interaction promotes KAT5 autoacetylation. Interacts with PRKDC; interaction is impaired following KAT5 sumoylation. Interacts with GPR50. Interacts with NME3; this interaction enables recruitment of NME3 at DNA damage sites where it plays a role in the repair of DNA. In terms of processing, phosphorylated on Ser-86 and Ser-90; enhanced during G2/M phase. The phosphorylated form has a higher activity. Phosphorylation at Ser-90 by CDK1 or CDK9 is a prerequisite for phosphorylation at Ser-86 by GSK3. Phosphorylation at Ser-86 by GSK3 (GSK3A or GSK3B) activates acetyltransferase and acyltransferase activity. Phosphorylation at Ser-90 by CDK9 promotes KAT5 recruitment to chromatin. Phosphorylation by VRK1 following DNA damage promotes KAT5 association with chromatin and histone acetyltransferase activity. Autoacetylated. Autoacetylation is required for histone acetyltransferase activity. Autoacetylation at Lys-327 is facilitated by interaction with EP300/p300: it prevents ubiquitination and subsequent degradation by the proteasome and promotes acetylation of target proteins. Deacetylated by HDAC3 and SIRT1. Deacetylation by HDAC3 promotes its ubiquitination and cytoplasmic localization. Post-translationally, sumoylated by UBE2I at Lys-430 and Lys-451, leading to increase of its histone acetyltransferase activity in UV-induced DNA damage response, as well as its translocation to nuclear bodies. Sumoylation with SUMO2 by PIAS4 at Lys-430 promotes repair of DNA double-strand breaks (DSBs) via homologous recombination (HR). Sumoylation by PIAS4 impairs interaction with PRKDC, inhibiting non-homologous end joining (NHEJ)-mediated repair of DSBs, thereby facilitating HR. Desumoylated by SENP3. In terms of processing, ubiquitinated by MDM2, leading to its proteasome-dependent degradation. Ubiquitination is prevented by autoacetylation at Lys-327. Ubiquitinated following deacetylation by HDAC3, leading to cytoplasmic localization. Deubiquitinated by USP7 following interaction with ATF3, promoting its stabilization. In terms of tissue distribution, expressed in testis, heart, brain, kidney and liver. Weakly expressed in lung.

The protein localises to the nucleus. It is found in the chromosome. It localises to the cytoplasm. Its subcellular location is the centromere. The protein resides in the kinetochore. The protein localises to the cytoskeleton. It is found in the spindle pole. It localises to the nucleolus. Its subcellular location is the perinuclear region. The enzyme catalyses L-lysyl-[histone] + acetyl-CoA = N(6)-acetyl-L-lysyl-[histone] + CoA + H(+). It catalyses the reaction L-lysyl-[protein] + acetyl-CoA = N(6)-acetyl-L-lysyl-[protein] + CoA + H(+). The catalysed reaction is (2E)-butenoyl-CoA + L-lysyl-[protein] = N(6)-(2E)-butenoyl-L-lysyl-[protein] + CoA + H(+). It carries out the reaction 2-hydroxyisobutanoyl-CoA + L-lysyl-[protein] = N(6)-(2-hydroxyisobutanoyl)-L-lysyl-[protein] + CoA + H(+). The enzyme catalyses (S)-lactoyl-CoA + L-lysyl-[protein] = N(6)-[(S)-lactoyl]-L-lysyl-[protein] + CoA + H(+). Its activity is regulated as follows. Acyltransferase and acetyltransferase activities are activated by phosphorylation and autoacetylation. Autoacetylation activates the histone acetyltransferase activity. Its function is as follows. Catalytic subunit of the NuA4 histone acetyltransferase complex, a multiprotein complex involved in transcriptional activation of select genes principally by acetylation of nucleosomal histones H2A and H4. Histone acetylation alters nucleosome-DNA interactions and promotes interaction of the modified histones with other proteins which positively regulate transcription. The NuA4 histone acetyltransferase complex is required for the activation of transcriptional programs associated with proto-oncogene mediated growth induction, tumor suppressor mediated growth arrest and replicative senescence, apoptosis, and DNA repair. The NuA4 complex plays a direct role in repair of DNA double-strand breaks (DSBs) by promoting homologous recombination (HR): the complex inhibits TP53BP1 binding to chromatin via MBTD1, which recognizes and binds histone H4 trimethylated at 'Lys-20' (H4K20me), and KAT5 that catalyzes acetylation of 'Lys-15' of histone H2A (H2AK15ac), thereby blocking the ubiquitination mark required for TP53BP1 localization at DNA breaks. Also involved in DSB repair by mediating acetylation of 'Lys-5' of histone H2AX (H2AXK5ac), promoting NBN/NBS1 assembly at the sites of DNA damage. The NuA4 complex plays a key role in hematopoietic stem cell maintenance and is required to maintain acetylated H2A.Z/H2AZ1 at MYC target genes. The NuA4 complex is also required for spermatid development by promoting acetylation of histones: histone hyperacetylation is required for histone replacement during the transition from round to elongating spermatids. Component of a SWR1-like complex that specifically mediates the removal of histone H2A.Z/H2AZ1 from the nucleosome. Also acetylates non-histone proteins, such as BMAL1, ATM, AURKB, CHKA, CGAS, ERCC4/XPF, LPIN1, TP53/p53, NDC80/HEC1, NR1D2, RAN, SOX4, FOXP3, SQSTM1, ULK1 and RUBCNL/Pacer. Directly acetylates and activates ATM. Promotes nucleotide excision repair (NER) by mediating acetylation of ERCC4/XPF, thereby promoting formation of the ERCC4-ERCC1 complex. Relieves NR1D2-mediated inhibition of APOC3 expression by acetylating NR1D2. Acts as a regulator of regulatory T-cells (Treg) by catalyzing FOXP3 acetylation, thereby promoting FOXP3 transcriptional repressor activity. Involved in skeletal myoblast differentiation by mediating acetylation of SOX4. Catalyzes acetylation of APBB1/FE65, increasing its transcription activator activity. Promotes transcription elongation during the activation phase of the circadian cycle by catalyzing acetylation of BMAL1, promoting elongation of circadian transcripts. Together with GSK3 (GSK3A or GSK3B), acts as a regulator of autophagy: phosphorylated at Ser-86 by GSK3 under starvation conditions, leading to activate acetyltransferase activity and promote acetylation of key autophagy regulators, such as ULK1 and RUBCNL/Pacer. Acts as a regulator of the cGAS-STING innate antiviral response by catalyzing acetylation the N-terminus of CGAS, thereby promoting CGAS DNA-binding and activation. Also regulates lipid metabolism by mediating acetylation of CHKA or LPIN1. Promotes lipolysis of lipid droplets following glucose deprivation by mediating acetylation of isoform 1 of CHKA, thereby promoting monomerization of CHKA and its conversion into a tyrosine-protein kinase. Acts as a regulator of fatty-acid-induced triacylglycerol synthesis by catalyzing acetylation of LPIN1, thereby promoting the synthesis of diacylglycerol. In addition to protein acetyltransferase, can use different acyl-CoA substrates, such as (2E)-butenoyl-CoA (crotonyl-CoA), S-lactoyl-CoA (lactyl-CoA) and 2-hydroxyisobutanoyl-CoA (2-hydroxyisobutyryl-CoA), and is able to mediate protein crotonylation, lactylation and 2-hydroxyisobutyrylation, respectively. Acts as a key regulator of chromosome segregation and kinetochore-microtubule attachment during mitosis by mediating acetylation or crotonylation of target proteins. Catalyzes acetylation of AURKB at kinetochores, increasing AURKB activity and promoting accurate chromosome segregation in mitosis. Acetylates RAN during mitosis, promoting microtubule assembly at mitotic chromosomes. Acetylates NDC80/HEC1 during mitosis, promoting robust kinetochore-microtubule attachment. Catalyzes crotonylation of MAPRE1/EB1, thereby ensuring accurate spindle positioning in mitosis. Catalyzes lactylation of NBN/NBS1 in response to DNA damage, thereby promoting DNA double-strand breaks (DSBs) via homologous recombination (HR). This is Histone acetyltransferase KAT5 from Mus musculus (Mouse).